Reading from the N-terminus, the 1249-residue chain is Clustered mitochondria protein homolog (1249 aa).

The disordered stretch occupies residues Met1–Asn32. The region spanning Asp318–Gln562 is the Clu domain. Residues Lys605–Glu628 show a composition bias toward basic and acidic residues. Disordered stretches follow at residues Lys605–Arg636 and Lys868–Glu903. 3 TPR repeats span residues Ala974 to Thr1007, Ile1016 to Ile1049, and Ile1058 to Leu1091. Positions Asn1174–Ala1249 are disordered. The span at Asn1176–Gln1190 shows a compositional bias: polar residues.

It belongs to the CLU family. As to quaternary structure, may associate with the eukaryotic translation initiation factor 3 (eIF-3) complex.

It is found in the cytoplasm. Functionally, mRNA-binding protein involved in proper cytoplasmic distribution of mitochondria. The protein is Clustered mitochondria protein homolog of Aspergillus niger (strain ATCC MYA-4892 / CBS 513.88 / FGSC A1513).